A 998-amino-acid chain; its full sequence is MSILDFPRIHFRGWARVNAPTANRDPHGHIDMASNTVAMAGEPFDLARHPTEFHRHLRSLGPRFGLDGRADPEGPFSLAEGYNAAGNNHFSWESATVSHVQWDGGEADRGDGLVGARLALWGHYNDYLRTTFNRARWVDSDPTRRDAAQIYAGQFTISPAGAGPGTPWLFTADIDDSHGARWTRGGHIAERGGHFLDEEFGLARLFQFSVPKDHPHFLFHPGPFDSEAWRRLQLALEDDDVLGLTVQYALFNMSTPPQPNSPVFHDMVGVVGLWRRGELASYPAGRLLRPRQPGLGDLTLRVSGGRVALNLACAIPFSTRAAQPSAPDRLTPDLGAKLPLGDLLLRDEDGALLARVPQALYQDYWTNHGIVDLPLLREPRGSLTLSSELAEWREQDWVTQSDASNLYLEAPDRRHGRFFPESIALRSYFRGEARARPDIPHRIEGMGLVGVESRQDGDAAEWRLTGLRPGPARIVLDDGAEAIPLRVLPDDWALDDATVEEVDYAFLYRHVMAYYELVYPFMSDKVFSLADRCKCETYARLMWQMCDPQNRNKSYYMPSTRELSAPKARLFLKYLAHVEGQARLQAPPPAGPARIESKAQLAAELRKAVDLELSVMLQYLYAAYSIPNYAQGQQRVRDGAWTAEQLQLACGSGDRRRDGGIRAALLEIAHEEMIHYLVVNNLLMALGEPFYAGVPLMGEAARQAFGLDTEFALEPFSESTLARFVRLEWPHFIPAPGKSIADCYAAIRQAFLDLPDLFGGEAGKRGGEHHLFLNELTNRAHPGYQLEVFDRDSALFGIAFVTDQGEGGALDSPHYEHSHFQRLREMSARIMAQSAPFEPALPALRNPVLDESPGCQRVADGRARALMALYQGVYELMFAMMAQHFAVKPLGSLRRSRLMNAAIDLMTGLLRPLSCALMNLPSGIAGRTAGPPLPGPVDTRSYDDYALGCRMLARRCERLLEQASMLEPGWLPDAQMELLDFYRRQMLDLACGKLSREA.

The enzyme catalyses 2 H2O2 = O2 + 2 H2O. It carries out the reaction 2 2-iminio-3-(indol-3-yl)propanoate + H2O2 = indole-3-pyruvate imine dimer + 2 H2O. It participates in pigment biosynthesis; violacein biosynthesis. Its function is as follows. Catalyzes the hydrogen peroxide-dependent dimerization of two L-tryptophan-derived molecules (imine form of indole 3-pyruvate (IPA)), to form an uncharacterized product suggested to be indole-3-pyruvate imine dimer that can spontaneously convert into dichlorochromopyrrolate (CPA). The uncharacterized product is the substrate of VioE. The protein is 2-imino-3-(indol-3-yl)propanoate dimerase (vioB) of Chromobacterium violaceum (strain ATCC 12472 / DSM 30191 / JCM 1249 / CCUG 213 / NBRC 12614 / NCIMB 9131 / NCTC 9757 / MK).